The sequence spans 379 residues: Queuine tRNA-ribosyltransferase (379 aa).

The Proton acceptor role is filled by Asp-94. Substrate-binding positions include 94 to 98 (DSGGF), Asp-148, Gln-191, and Gly-218. The segment at 249–255 (GVGSPDA) is RNA binding. Asp-268 (nucleophile) is an active-site residue. Residues 273–277 (TRIAR) are RNA binding; important for wobble base 34 recognition. Positions 306, 308, 311, and 337 each coordinate Zn(2+).

Belongs to the queuine tRNA-ribosyltransferase family. Homodimer. Within each dimer, one monomer is responsible for RNA recognition and catalysis, while the other monomer binds to the replacement base PreQ1. Zn(2+) serves as cofactor.

The catalysed reaction is 7-aminomethyl-7-carbaguanine + guanosine(34) in tRNA = 7-aminomethyl-7-carbaguanosine(34) in tRNA + guanine. The protein operates within tRNA modification; tRNA-queuosine biosynthesis. Its function is as follows. Catalyzes the base-exchange of a guanine (G) residue with the queuine precursor 7-aminomethyl-7-deazaguanine (PreQ1) at position 34 (anticodon wobble position) in tRNAs with GU(N) anticodons (tRNA-Asp, -Asn, -His and -Tyr). Catalysis occurs through a double-displacement mechanism. The nucleophile active site attacks the C1' of nucleotide 34 to detach the guanine base from the RNA, forming a covalent enzyme-RNA intermediate. The proton acceptor active site deprotonates the incoming PreQ1, allowing a nucleophilic attack on the C1' of the ribose to form the product. After dissociation, two additional enzymatic reactions on the tRNA convert PreQ1 to queuine (Q), resulting in the hypermodified nucleoside queuosine (7-(((4,5-cis-dihydroxy-2-cyclopenten-1-yl)amino)methyl)-7-deazaguanosine). The protein is Queuine tRNA-ribosyltransferase of Staphylococcus aureus (strain Mu3 / ATCC 700698).